A 91-amino-acid polypeptide reads, in one-letter code: Large ribosomal subunit protein bL27 (91 aa).

Positions 1–25 are disordered; sequence MAHKKGAASSNNGRDSESKRLGVKR.

This sequence belongs to the bacterial ribosomal protein bL27 family.

In Corynebacterium kroppenstedtii (strain DSM 44385 / JCM 11950 / CIP 105744 / CCUG 35717), this protein is Large ribosomal subunit protein bL27.